A 515-amino-acid chain; its full sequence is Low affinity ammonium transporter (515 aa).

Residues 1-78 (MSTSSSVTQK…IIGNSFGTTN (78 aa)) lie on the Extracellular side of the membrane. Residues 79 to 99 (AGQLSWFASAYSLTVGTFILI) traverse the membrane as a helical segment. Residues 100–111 (AGRLGDIFGHKK) lie on the Cytoplasmic side of the membrane. A helical transmembrane segment spans residues 112-132 (FFVLGFFWYALWSLLAGFSVY). The Extracellular portion of the chain corresponds to 133–140 (SNQIFFDC). Residues 141–161 (CRAFQGMGPAFLLPNAIAILG) traverse the membrane as a helical segment. The Cytoplasmic portion of the chain corresponds to 162–171 (RTYKPGRRKN). Residues 172–192 (MVFSLFGASAPGGFFLGAVFS) form a helical membrane-spanning segment. Residues 193-202 (SMLGQLAWWP) lie on the Extracellular side of the membrane. The chain crosses the membrane as a helical span at residues 203–223 (WAYWIMGIACFVLAVAGYFVI). The Cytoplasmic portion of the chain corresponds to 224-241 (PHTPMPSRDASSFKLLER). A helical membrane pass occupies residues 242–262 (IDFAGSVTGVVGLILFNFAWN). The Extracellular segment spans residues 263-270 (QGPVVGWQ). The chain crosses the membrane as a helical span at residues 271–291 (TPYTYALLIVGTFFLVIFAYI). Topologically, residues 292-310 (ESRAAFPLLPFAALSSDTA) are cytoplasmic. Residues 311–331 (FVLSCIAAGWASFGIWIFYTW) traverse the membrane as a helical segment. At 332 to 346 (QFMEDSRGQTPLLSS) the chain is on the extracellular side. Residues 347–367 (AQFSPVAISGFCAAVTTGFLL) form a helical membrane-spanning segment. At 368 to 374 (SHTPPST) the chain is on the cytoplasmic side. A helical transmembrane segment spans residues 375-395 (VMLFAMTAFTVGTILIATAPV). Topologically, residues 396–403 (HQTYWAQT) are extracellular. The chain crosses the membrane as a helical span at residues 404–424 (FVSIIVMPWGMDMSFPAATIM). Topologically, residues 425-435 (LSDSMPHEHQG) are cytoplasmic. A helical transmembrane segment spans residues 436–456 (LAASLVNTVVNYSISIGLGIA). At 457–479 (GTIESRVNDGGAKPLKGYRCSWY) the chain is on the extracellular side. Residues 480 to 500 (MGIGLSGLGIFVAATYAWSTF) traverse the membrane as a helical segment. Topologically, residues 501–515 (MKSKKRISEKQHFIE) are cytoplasmic.

This sequence belongs to the major facilitator superfamily.

It is found in the cell membrane. Functionally, low affinity ammonium transporter of the plasma membrane. May be involved in drug resistance through pumping them out of the cell. This is Low affinity ammonium transporter from Saccharomyces cerevisiae (strain ATCC 204508 / S288c) (Baker's yeast).